Consider the following 183-residue polypeptide: MRKIVVAAIAVSLTTVSITASASADPSKDSKAQVSAAEAGITGTWYNQLGSTFIVTAGADGALTGTYESAVGNAESRYVLTGRYDSAPATDGSGTALGWTVAWKNNYRNAHSATTWSGQYVGGTEARINTQWLLTSGTTEANAWKSTLVGHDTFTKVKPSAASIDAAKKAGVNNGNPLDAVQQ.

Residues 1–24 (MRKIVVAAIAVSLTTVSITASASA) form the signal peptide. The Avidin-like domain maps to 37-159 (AEAGITGTWY…GHDTFTKVKP (123 aa)). Biotin contacts are provided by tyrosine 67 and tyrosine 78. Residues 83 to 85 (RYD) carry the Cell attachment site; atypical motif. Residues tryptophan 116, tryptophan 132, and tryptophan 144 each contribute to the biotin site.

The protein belongs to the avidin/streptavidin family. As to quaternary structure, homotetramer.

The protein resides in the secreted. The biological function of streptavidin is not known. Forms a strong non-covalent specific complex with biotin (one molecule of biotin per subunit of streptavidin). The chain is Streptavidin-V1 from Streptomyces violaceus (Streptomyces venezuelae).